The following is a 345-amino-acid chain: Dense granule protein 4 (345 aa).

The signal sequence occupies residues 1–20; that stretch reads MQGTWFSLFVVVMVSHLACG. Polar residues predominate over residues 227–251; the sequence is SVSVSTEDSGLTGVKDSSSSESTVT. Residues 227-271 form a disordered region; that stretch reads SVSVSTEDSGLTGVKDSSSSESTVTPADEAASESEEGDKTSRKSK. A helical transmembrane segment spans residues 276 to 296; that stretch reads ILTGLGVAATLAAAAAAAKAV. The segment at 298 to 345 is disordered; sequence GFGGTRTSTAPAEAGKTELDDGYRPPPFNPRPSPYAELLKDLERMRKE. A compositionally biased stretch (pro residues) spans 321–330; the sequence is RPPPFNPRPS. The segment covering 335-345 has biased composition (basic and acidic residues); it reads LLKDLERMRKE.

Post-translationally, O-glycosylated.

It localises to the secreted. Its subcellular location is the parasitophorous vacuole lumen. The protein localises to the parasitophorous vacuole membrane. The protein resides in the cytoplasmic vesicle. It is found in the secretory vesicle. Functionally, major granular component involved in excreted-secreted antigen (ESA) immunity. The sequence is that of Dense granule protein 4 (GRA4) from Toxoplasma gondii.